The following is a 458-amino-acid chain: tRNA modification GTPase MnmE (458 aa).

Residues arginine 22, glutamate 84, and arginine 123 each coordinate (6S)-5-formyl-5,6,7,8-tetrahydrofolate. Positions 220 to 379 (GIATAIIGRP…LEKAIADLFF (160 aa)) constitute a TrmE-type G domain. Residue asparagine 230 participates in K(+) binding. Residues 230 to 235 (NVGKSS), 249 to 255 (TDIAGTT), and 274 to 277 (DTAG) contribute to the GTP site. Serine 234 is a binding site for Mg(2+). 3 residues coordinate K(+): threonine 249, isoleucine 251, and threonine 254. Threonine 255 is a Mg(2+) binding site. Lysine 458 serves as a coordination point for (6S)-5-formyl-5,6,7,8-tetrahydrofolate.

The protein belongs to the TRAFAC class TrmE-Era-EngA-EngB-Septin-like GTPase superfamily. TrmE GTPase family. As to quaternary structure, homodimer. Heterotetramer of two MnmE and two MnmG subunits. It depends on K(+) as a cofactor.

It localises to the cytoplasm. Exhibits a very high intrinsic GTPase hydrolysis rate. Involved in the addition of a carboxymethylaminomethyl (cmnm) group at the wobble position (U34) of certain tRNAs, forming tRNA-cmnm(5)s(2)U34. The chain is tRNA modification GTPase MnmE from Bacillus thuringiensis (strain Al Hakam).